Here is a 314-residue protein sequence, read N- to C-terminus: Ribosomal RNA small subunit methyltransferase H 2 (314 aa).

S-adenosyl-L-methionine-binding positions include 33-35 (AGH), D53, Y80, D101, and Q108. Residues 293–314 (KELEENSRSKSAKLRVFEKNDL) are disordered.

It belongs to the methyltransferase superfamily. RsmH family.

It localises to the cytoplasm. The catalysed reaction is cytidine(1402) in 16S rRNA + S-adenosyl-L-methionine = N(4)-methylcytidine(1402) in 16S rRNA + S-adenosyl-L-homocysteine + H(+). Functionally, specifically methylates the N4 position of cytidine in position 1402 (C1402) of 16S rRNA. This is Ribosomal RNA small subunit methyltransferase H 2 from Agathobacter rectalis (strain ATCC 33656 / DSM 3377 / JCM 17463 / KCTC 5835 / VPI 0990) (Eubacterium rectale).